The sequence spans 661 residues: MKTVRESTTLYNFLGSHNPYWRLTESSDVLRFSTTETTEPDRTLQLSAEQAARIREMTVITSSLMMSLTVDESDLSVHLVGRKINKREWAGNASAWHDTPAVARDLSHGLSFAEQVVSEAHSAIVILDSRGNIQRFNRLCEDYTGLKEHDVIGQSVFKLFMSRREAAASRRNNRVFFRSGNAYEVELWIPTCKGQRLFLFRNKFVHSGSGKNEIFLICSGTDITEERRAQERLRILANTDSITGLPNRNAMQDLIDHAINHADNNKVGVVYLDLDNFKKVNDAYGHLFGDQLLRDVSLAILSCLEHDQVLARPGGDEFLVLASNTSQSALEAMASRILTRLRLPFRIGLIEVYTSCSVGIALSPEHGSDSTAIIRHADTAMYTAKEGGRGQFCVFTPEMNQRVFEYLWLDTNLRKALENDQLVIHYQPKITWRGEVRSLEALVRWQSPERGLIPPLDFISYAEESGLIVPLGRWVILDVVRQVAKWRDKGINLRVAVNISARQLADQTIFTALKQVLQELNFEYCPIDVELTESCLIENDELALSVIQQFSQLGAQVHLDDFGTGYSSLSQLARFPIDAIKLDQVFVRDIHKQPVSQSLVRAIVAVAQALNLQVIAEGVESAKEDAFLTKNGINERQGFLFAKPMPAVAFERWYKRYLKRA.

A PAS domain is found at 109–179 (GLSFAEQVVS…RRNNRVFFRS (71 aa)). A GGDEF domain is found at 265–397 (NKVGVVYLDL…GRGQFCVFTP (133 aa)). In terms of domain architecture, EAL spans 406–658 (YLWLDTNLRK…AFERWYKRYL (253 aa)).

As to quaternary structure, interacts with DgcM and MlrA.

The catalysed reaction is 3',3'-c-di-GMP + H2O = 5'-phosphoguanylyl(3'-&gt;5')guanosine + H(+). Part of a signaling cascade that regulates curli biosynthesis. The cascade is composed of two cyclic-di-GMP (c-di-GMP) control modules, in which c-di-GMP controlled by the DgcE/PdeH pair (module I) regulates the activity of the DgcM/PdeR pair (module II), which in turn regulates activity of the transcription factor MlrA and expression of the master biofilm regulator csgD. PdeR acts as a trigger enzyme that connects modules I and II. It inhibits DgcM and MlrA by direct interaction. Inhibition is relieved when PdeR binds and degrades c-di-GMP generated by module I. This chain is Cyclic di-GMP phosphodiesterase PdeR, found in Escherichia coli (strain K12).